The chain runs to 183 residues: Large ribosomal subunit protein uL13m (183 aa).

Belongs to the universal ribosomal protein uL13 family. As to quaternary structure, component of the mitochondrial large ribosomal subunit (mt-LSU). Mature N.crassa 74S mitochondrial ribosomes consist of a small (37S) and a large (54S) subunit. The 37S small subunit contains a 16S ribosomal RNA (16S mt-rRNA) and 32 different proteins. The 54S large subunit contains a 23S rRNA (23S mt-rRNA) and 42 different proteins.

It localises to the mitochondrion. Component of the mitochondrial ribosome (mitoribosome), a dedicated translation machinery responsible for the synthesis of mitochondrial genome-encoded proteins, including at least some of the essential transmembrane subunits of the mitochondrial respiratory chain. The mitoribosomes are attached to the mitochondrial inner membrane and translation products are cotranslationally integrated into the membrane. The protein is Large ribosomal subunit protein uL13m (mrpl23) of Neurospora crassa (strain ATCC 24698 / 74-OR23-1A / CBS 708.71 / DSM 1257 / FGSC 987).